We begin with the raw amino-acid sequence, 93 residues long: ATP-dependent Clp protease adapter protein ClpS (93 aa).

It belongs to the ClpS family. As to quaternary structure, binds to the N-terminal domain of the chaperone ClpA.

Involved in the modulation of the specificity of the ClpAP-mediated ATP-dependent protein degradation. The chain is ATP-dependent Clp protease adapter protein ClpS from Gloeobacter violaceus (strain ATCC 29082 / PCC 7421).